The primary structure comprises 123 residues: Protein LLP homolog (123 aa).

Over residues Met-1–Asn-21 the composition is skewed to basic residues. Disordered stretches follow at residues Met-1–Pro-23 and Lys-55–Trp-123. Over residues Asp-70–His-89 the composition is skewed to basic and acidic residues. Basic residues predominate over residues Gln-100 to Trp-123.

The protein belongs to the learning-associated protein family.

It localises to the nucleus. It is found in the nucleolus. The protein resides in the chromosome. Its function is as follows. Regulates dendritic and spine growth and synaptic transmission. In Xenopus tropicalis (Western clawed frog), this protein is Protein LLP homolog (llph).